We begin with the raw amino-acid sequence, 404 residues long: Cysteine desulfurase IscS (404 aa).

Residues 75–76 (AT), Asn-155, Gln-183, and 203–205 (SAH) each bind pyridoxal 5'-phosphate. N6-(pyridoxal phosphate)lysine is present on Lys-206. Pyridoxal 5'-phosphate is bound at residue Thr-243. The Cysteine persulfide intermediate role is filled by Cys-328. Residue Cys-328 participates in [2Fe-2S] cluster binding.

The protein belongs to the class-V pyridoxal-phosphate-dependent aminotransferase family. NifS/IscS subfamily. In terms of assembly, homodimer. Forms a heterotetramer with IscU, interacts with other sulfur acceptors. It depends on pyridoxal 5'-phosphate as a cofactor.

Its subcellular location is the cytoplasm. The enzyme catalyses (sulfur carrier)-H + L-cysteine = (sulfur carrier)-SH + L-alanine. It participates in cofactor biosynthesis; iron-sulfur cluster biosynthesis. In terms of biological role, master enzyme that delivers sulfur to a number of partners involved in Fe-S cluster assembly, tRNA modification or cofactor biosynthesis. Catalyzes the removal of elemental sulfur atoms from cysteine to produce alanine. Functions as a sulfur delivery protein for Fe-S cluster synthesis onto IscU, an Fe-S scaffold assembly protein, as well as other S acceptor proteins. The chain is Cysteine desulfurase IscS from Pseudomonas fluorescens (strain SBW25).